The primary structure comprises 468 residues: 6-phospho-beta-galactosidase (468 aa).

Residues Gln19, His116, Asn159, Glu160, and Asn297 each contribute to the D-galactose 6-phosphate site. Catalysis depends on Glu160, which acts as the Proton donor. Glu375 acts as the Nucleophile in catalysis. Residues Ser428, Trp429, Lys435, and Tyr437 each contribute to the D-galactose 6-phosphate site.

Belongs to the glycosyl hydrolase 1 family.

The enzyme catalyses a 6-phospho-beta-D-galactoside + H2O = D-galactose 6-phosphate + an alcohol. It functions in the pathway carbohydrate metabolism; lactose degradation; D-galactose 6-phosphate and beta-D-glucose from lactose 6-phosphate: step 1/1. This chain is 6-phospho-beta-galactosidase, found in Streptococcus pyogenes serotype M12 (strain MGAS2096).